A 434-amino-acid chain; its full sequence is 5-methylthioadenosine/S-adenosylhomocysteine deaminase (434 aa).

2 residues coordinate Zn(2+): histidine 66 and histidine 68. Substrate-binding residues include glutamate 95, arginine 148, and histidine 188. Zn(2+) is bound at residue histidine 215. Residues glutamate 218 and aspartate 304 each contribute to the substrate site. Aspartate 304 contributes to the Zn(2+) binding site.

Belongs to the metallo-dependent hydrolases superfamily. MTA/SAH deaminase family. It depends on Zn(2+) as a cofactor.

It catalyses the reaction S-adenosyl-L-homocysteine + H2O + H(+) = S-inosyl-L-homocysteine + NH4(+). The enzyme catalyses S-methyl-5'-thioadenosine + H2O + H(+) = S-methyl-5'-thioinosine + NH4(+). In terms of biological role, catalyzes the deamination of 5-methylthioadenosine and S-adenosyl-L-homocysteine into 5-methylthioinosine and S-inosyl-L-homocysteine, respectively. Is also able to deaminate adenosine. This chain is 5-methylthioadenosine/S-adenosylhomocysteine deaminase, found in Shouchella clausii (strain KSM-K16) (Alkalihalobacillus clausii).